A 428-amino-acid polypeptide reads, in one-letter code: Endoplasmic reticulum junction formation protein lunapark (428 aa).

The N-myristoyl glycine moiety is linked to residue Gly2. Residues 2 to 45 lie on the Cytoplasmic side of the membrane; the sequence is GGLFSRWRTKPSTVEVLESIDKEIQALEEFREKNQRLQKLWVGR. The stretch at 16–41 forms a coiled coil; the sequence is EVLESIDKEIQALEEFREKNQRLQKL. The helical transmembrane segment at 46 to 66 threads the bilayer; the sequence is LILYSSVLYLFTCLIVYLWYL. Residues 67–77 are Lumenal-facing; sequence PDEFTARLAMT. The chain crosses the membrane as a helical span at residues 78-98; it reads LPFFAFPLIIWSIRTVIIFFF. At 99–428 the chain is on the cytoplasmic side; sequence SKRTERNNEA…ELSGESLTAE (330 aa). Positions 102-128 form a coiled coil; that stretch reads TERNNEALDDLKSQRKKILEEVMEKET. 5 positions are modified to phosphoserine: Ser114, Ser153, Ser177, Ser182, and Ser194. The disordered stretch occupies residues 143-247; sequence SKKAKECEPP…HPPGPPLARP (105 aa). The segment covering 185-198 has biased composition (pro residues); sequence QGPPPQVPVSPGPP. Thr211 and Thr213 each carry phosphothreonine. A phosphoserine mark is found at Ser217 and Ser227. A C4-type; plays a role in ER morphology zinc finger spans residues 276–301; that stretch reads CQQCFSHNGMALKEEFEYIAFRCAYC. Phosphoserine is present on residues Ser321, Ser353, and Ser384. Residues 356–428 form a disordered region; it reads HDVLDDNTEQ…ELSGESLTAE (73 aa). Acidic residues predominate over residues 386–401; it reads SEEPEEKQETENEEAS. Ser414 carries the phosphoserine modification.

Belongs to the lunapark family. Homodimer; homodimerization requires the C4-type zinc finger motif and decreases during mitosis in a phosphorylation-dependent manner. In terms of processing, myristoylated; myristoylation is necessary for the endoplasmic reticulum (ER) three-way ER tubular junction formation, but is not required neither for membrane translocation, membrane topology formation, nor for the specific localization to ER membranes. Post-translationally, phosphorylated. Phosphorylation occurs at Ser-177, Ser-182, Ser-217, Ser-227, Ser-321 and Ser-384 during interphase. Phosphorylation occurs at Ser-114, Ser-153, Ser-194, Thr-211 and Ser-353 during mitosis; these phosphorylations reduce both its homodimerization and the ER three-way tubular junction formation. Subject to proteasomal degradation following phosphorylation during mitosis. Expressed in neural precursor cells, where it is detected at the growth-cone-like structure and branching sites of neurite-like processes.

The protein resides in the endoplasmic reticulum membrane. Endoplasmic reticulum (ER)-shaping membrane protein that plays a role in determining ER morphology. Involved in the stabilization of nascent three-way ER tubular junctions within the ER network. May also play a role as a curvature-stabilizing protein within the three-way ER tubular junction network. May be involved in limb development. Is involved in central nervous system development. In Homo sapiens (Human), this protein is Endoplasmic reticulum junction formation protein lunapark.